We begin with the raw amino-acid sequence, 359 residues long: (2E,6E)-farnesyl diphosphate synthase (359 aa).

The interval Met-1 to Arg-21 is disordered. Lys-73, Arg-76, and His-105 together coordinate isopentenyl diphosphate. Mg(2+) is bound by residues Asp-112 and Asp-116. A DDXXD motif motif is present at residues Asp-112–Asp-116. Arg-121 lines the (2E)-geranyl diphosphate pocket. Arg-122 contributes to the isopentenyl diphosphate binding site. Residues Lys-201, Thr-202, and Gln-239 each coordinate (2E)-geranyl diphosphate. The short motif at Asp-242–Gly-246 is the DDXXD motif element. 2 residues coordinate (2E)-geranyl diphosphate: Lys-256 and Lys-266.

It belongs to the FPP/GGPP synthase family. Mg(2+) is required as a cofactor.

The protein localises to the cytoplasm. It catalyses the reaction isopentenyl diphosphate + (2E)-geranyl diphosphate = (2E,6E)-farnesyl diphosphate + diphosphate. Its pathway is isoprenoid biosynthesis; farnesyl diphosphate biosynthesis; farnesyl diphosphate from geranyl diphosphate and isopentenyl diphosphate. In terms of biological role, catalyzes the condensation of isopentenyl pyrophosphate (IPP) with geranyl diphosphate (GPP) to yield (2E,6E)-farnesyl diphosphate (E,E-FPP). May be used for squalene and possibly sterol biosynthesis. In Mycobacterium bovis (strain ATCC BAA-935 / AF2122/97), this protein is (2E,6E)-farnesyl diphosphate synthase.